The chain runs to 184 residues: Photosystem I assembly protein Ycf4 (184 aa).

The next 2 membrane-spanning stretches (helical) occupy residues 22-42 (FCWA…GISS) and 57-77 (ILFF…LFIS).

It belongs to the Ycf4 family.

The protein localises to the plastid. It is found in the chloroplast thylakoid membrane. Seems to be required for the assembly of the photosystem I complex. The sequence is that of Photosystem I assembly protein Ycf4 from Illicium oligandrum (Star anise).